The chain runs to 306 residues: Leucine-rich repeat-containing protein 75B (306 aa).

The tract at residues 1-22 is disordered; sequence MGARLGRRARADAPAAPSAGPA. Over residues 12-22 the composition is skewed to low complexity; that stretch reads DAPAAPSAGPA. 2 LRR repeats span residues 173 to 186 and 198 to 211; these read LVVLDLSFTELSDE and LPRLTQLLLNGNRL.

The protein belongs to the LRRC75 family.

Its function is as follows. May suppress myogenic differentiation by modulating MYOG expression and Erk1/2 signaling. The sequence is that of Leucine-rich repeat-containing protein 75B from Mus musculus (Mouse).